The following is a 697-amino-acid chain: Potassium-transporting ATPase ATP-binding subunit (697 aa).

The next 4 membrane-spanning stretches (helical) occupy residues 55–75 (PIMF…FLPS), 82–102 (GWFN…ANFA), 245–265 (LTFI…YLGF), and 271–291 (VLVA…LSAI). Asp324 (4-aspartylphosphate intermediate) is an active-site residue. Residues Asp361, Glu365, 393 to 400 (FKAETRMS), and Lys412 each bind ATP. Positions 535 and 539 each coordinate Mg(2+). The next 3 helical transmembrane spans lie at 605-625 (FAII…LNIM), 633-653 (AILS…PLAM), and 677-697 (GGVI…GLFI).

The protein belongs to the cation transport ATPase (P-type) (TC 3.A.3) family. Type IA subfamily. As to quaternary structure, the system is composed of three essential subunits: KdpA, KdpB and KdpC.

The protein resides in the cell membrane. The catalysed reaction is K(+)(out) + ATP + H2O = K(+)(in) + ADP + phosphate + H(+). Its function is as follows. Part of the high-affinity ATP-driven potassium transport (or Kdp) system, which catalyzes the hydrolysis of ATP coupled with the electrogenic transport of potassium into the cytoplasm. This subunit is responsible for energy coupling to the transport system and for the release of the potassium ions to the cytoplasm. The protein is Potassium-transporting ATPase ATP-binding subunit of Bacillus cereus (strain AH187).